The chain runs to 378 residues: Erythronate-4-phosphate dehydrogenase (378 aa).

Residues serine 45 and threonine 66 each contribute to the substrate site. NAD(+) is bound by residues aspartate 146 and threonine 175. Arginine 208 is a catalytic residue. Aspartate 232 lines the NAD(+) pocket. The active site involves glutamate 237. Histidine 254 serves as the catalytic Proton donor. NAD(+) is bound at residue glycine 257. Position 258 (tyrosine 258) interacts with substrate.

Belongs to the D-isomer specific 2-hydroxyacid dehydrogenase family. PdxB subfamily. As to quaternary structure, homodimer.

Its subcellular location is the cytoplasm. It carries out the reaction 4-phospho-D-erythronate + NAD(+) = (R)-3-hydroxy-2-oxo-4-phosphooxybutanoate + NADH + H(+). The protein operates within cofactor biosynthesis; pyridoxine 5'-phosphate biosynthesis; pyridoxine 5'-phosphate from D-erythrose 4-phosphate: step 2/5. Its function is as follows. Catalyzes the oxidation of erythronate-4-phosphate to 3-hydroxy-2-oxo-4-phosphonooxybutanoate. The protein is Erythronate-4-phosphate dehydrogenase of Escherichia coli O45:K1 (strain S88 / ExPEC).